Reading from the N-terminus, the 103-residue chain is Small ribosomal subunit protein uS10 (103 aa).

This sequence belongs to the universal ribosomal protein uS10 family. In terms of assembly, part of the 30S ribosomal subunit.

Functionally, involved in the binding of tRNA to the ribosomes. In Haemophilus ducreyi (strain 35000HP / ATCC 700724), this protein is Small ribosomal subunit protein uS10.